The following is a 161-amino-acid chain: MEYNTSELCDIYLDQVDVIEPMFNSYGGRSSFGGQITTVKCFEDNALLRTVLQQPGVGRVLLVDGGGSLRRALIDADIALLATENEWEGLIVYGSVRNVDDLDELEIGIQAIASIPVGADQQGVGDVDIAVNFGGVTFLPEDHIYADNTGVILSPEPLDIE.

Belongs to the RraA family. As to quaternary structure, homotrimer. Binds to both RNA-binding sites in the C-terminal region of Rne and to RhlB.

Its subcellular location is the cytoplasm. Its function is as follows. Globally modulates RNA abundance by binding to RNase E (Rne) and regulating its endonucleolytic activity. Can modulate Rne action in a substrate-dependent manner by altering the composition of the degradosome. Modulates RNA-binding and helicase activities of the degradosome. The protein is Regulator of ribonuclease activity A of Photobacterium profundum (strain SS9).